A 341-amino-acid chain; its full sequence is tRNA N6-adenosine threonylcarbamoyltransferase (341 aa).

Fe cation is bound by residues His-111 and His-115. Residues 134-138, Asp-167, Gly-180, and Asn-276 each bind substrate; that span reads LVSGG. Asp-304 serves as a coordination point for Fe cation.

This sequence belongs to the KAE1 / TsaD family. Fe(2+) is required as a cofactor.

The protein resides in the cytoplasm. It catalyses the reaction L-threonylcarbamoyladenylate + adenosine(37) in tRNA = N(6)-L-threonylcarbamoyladenosine(37) in tRNA + AMP + H(+). Required for the formation of a threonylcarbamoyl group on adenosine at position 37 (t(6)A37) in tRNAs that read codons beginning with adenine. Is involved in the transfer of the threonylcarbamoyl moiety of threonylcarbamoyl-AMP (TC-AMP) to the N6 group of A37, together with TsaE and TsaB. TsaD likely plays a direct catalytic role in this reaction. This Pseudomonas fluorescens (strain SBW25) protein is tRNA N6-adenosine threonylcarbamoyltransferase.